A 194-amino-acid chain; its full sequence is Protein GrpE (194 aa).

The span at 1–13 (MENTQENPTSQNP) shows a compositional bias: polar residues. Residues 1 to 50 (MENTQENPTSQNPKPAEETARQAAEAAAPQQEAAANAATDSPASAEQAAL) form a disordered region. Over residues 21 to 50 (RQAAEAAAPQQEAAANAATDSPASAEQAAL) the composition is skewed to low complexity.

The protein belongs to the GrpE family. In terms of assembly, homodimer.

The protein localises to the cytoplasm. In terms of biological role, participates actively in the response to hyperosmotic and heat shock by preventing the aggregation of stress-denatured proteins, in association with DnaK and GrpE. It is the nucleotide exchange factor for DnaK and may function as a thermosensor. Unfolded proteins bind initially to DnaJ; upon interaction with the DnaJ-bound protein, DnaK hydrolyzes its bound ATP, resulting in the formation of a stable complex. GrpE releases ADP from DnaK; ATP binding to DnaK triggers the release of the substrate protein, thus completing the reaction cycle. Several rounds of ATP-dependent interactions between DnaJ, DnaK and GrpE are required for fully efficient folding. The protein is Protein GrpE of Paraburkholderia xenovorans (strain LB400).